A 473-amino-acid chain; its full sequence is Photosystem II CP43 reaction center protein (473 aa).

The propeptide occupies 1 to 14; sequence MKTLYSPRRYYPVE. An N-acetylthreonine modification is found at T15. T15 carries the post-translational modification Phosphothreonine. A run of 5 helical transmembrane segments spans residues 69-93, 134-155, 178-200, 255-275, and 291-312; these read LFEV…PHLA, IIGP…KDKN, KAVW…RVIT, KPFA…LSYS, and WFNN…ASQA. Residue E367 participates in [CaMn4O5] cluster binding. The helical transmembrane segment at 447–471 threads the bilayer; the sequence is RARAAAAGFEKGIERETEPVLFMSP.

The protein belongs to the PsbB/PsbC family. PsbC subfamily. As to quaternary structure, PSII is composed of 1 copy each of membrane proteins PsbA, PsbB, PsbC, PsbD, PsbE, PsbF, PsbH, PsbI, PsbJ, PsbK, PsbL, PsbM, PsbT, PsbX, PsbY, PsbZ, Psb30/Ycf12, at least 3 peripheral proteins of the oxygen-evolving complex and a large number of cofactors. It forms dimeric complexes. It depends on Binds multiple chlorophylls and provides some of the ligands for the Ca-4Mn-5O cluster of the oxygen-evolving complex. It may also provide a ligand for a Cl- that is required for oxygen evolution. PSII binds additional chlorophylls, carotenoids and specific lipids. as a cofactor.

The protein localises to the plastid. It is found in the chloroplast thylakoid membrane. Functionally, one of the components of the core complex of photosystem II (PSII). It binds chlorophyll and helps catalyze the primary light-induced photochemical processes of PSII. PSII is a light-driven water:plastoquinone oxidoreductase, using light energy to abstract electrons from H(2)O, generating O(2) and a proton gradient subsequently used for ATP formation. This is Photosystem II CP43 reaction center protein from Chaetosphaeridium globosum (Charophycean green alga).